The sequence spans 382 residues: D-galactonate dehydratase (382 aa).

Residue Asp-183 coordinates Mg(2+). His-185 functions as the Proton donor in the catalytic mechanism. Residues Glu-209 and Glu-235 each coordinate Mg(2+). His-285 (proton acceptor) is an active-site residue.

Belongs to the mandelate racemase/muconate lactonizing enzyme family. GalD subfamily. Mg(2+) serves as cofactor.

It catalyses the reaction D-galactonate = 2-dehydro-3-deoxy-D-galactonate + H2O. It functions in the pathway carbohydrate acid metabolism; D-galactonate degradation; D-glyceraldehyde 3-phosphate and pyruvate from D-galactonate: step 1/3. Functionally, catalyzes the dehydration of D-galactonate to 2-keto-3-deoxy-D-galactonate. The sequence is that of D-galactonate dehydratase from Klebsiella pneumoniae (strain 342).